Here is a 388-residue protein sequence, read N- to C-terminus: Sex-determination protein fem-3 (388 aa).

6 consecutive repeat copies span residues 7–10, 110–113, 141–144, 234–237, 284–287, and 371–374.

As to quaternary structure, component of a complex containing fem-1, fem-2 and fem-3. Interacts with fem-1 and fem-2 (via N-terminus). Part of a E3 ubiquitin-protein ligase complex, at least composed of cul-2, elc-1, tra-1, fem-1, fem-2 and fem-3; mediates the ubiquitination and subsequent proteasomal degradation of tra-1. Interacts with tra-1. Interacts with sel-10. Interacts with tra-2.

Required for male development. In XO (male) animals, fem-3 directs male differentiation in all tissues. In XX (hermaphrodite) animals, it specifies the first 80 or so germ cells to be sperm. Negatively regulates male development when bound to tra-2. Together with fem-2 associates with the CBC(fem-1) E3 ubiquitin-protein ligase complex which mediates the ubiquitination and subsequent proteasomal degradation of tra-1. This chain is Sex-determination protein fem-3 (fem-3), found in Caenorhabditis elegans.